Reading from the N-terminus, the 855-residue chain is MNESFDKDFSNHTPMMQQYLKLKAQHPEILLFYRMGDFYELFYDDAKRASQLLDISLTKRGASAGEPIPMAGIPHHAVENYLAKLVNQGESVAICEQIGDPATSKGPVERKVVRIVTPGTISDEALLQERQDNLLAAIWQDGKGYGYATLDISSGRFRLSEPADRETMAAELQRTNPAELLYAEDFAEMALIEGRRGLRRRPLWEFEIDTARQQLNLQFGTRDLVGFGVENASRGLCAAGCLLQYVKDTQRTSLPHIRSITMERQQDSIIMDAATRRNLEITQNLAGGVENTLAAVLDCTVTPMGSRMLKRWLHMPVRNTDILRERQQTIGALQDTVSELQPVLRQVGDLERILARLALRTARPRDLARMRHAFQQLPELHAQLETVDSAPVQALRKKMGDFAELRDLLERAIIDAPPVLVRDGGVIAPGYHEELDEWRALADGATDYLDCLEIRERERTGLDTLKVGYNAVHGYYIQISRGQSHLAPINYVRRQTLKNAERYIIPELKEYEDKVLTSKGKALALEKQLYDELFDLLLPHLADLQQSANALAELDVLVNLAERAWTLNYTCPTFTDKPGIRITEGRHPVVEQVLNEPFIANPLNLSPQRRMLIITGPNMGGKSTYMRQTALIALLAYIGSYVPAQNVEIGPIDRIFTRVGAADDLASGRSTFMVEMTETANILHNATENSLVLMDEIGRGTSTYDGLSLAWACAENLANKIKALTLFATHYFELTQLPEKMEGVANVHLDALEHGDTIAFMHSVQDGAASKSYGLAVAALAGVPKEVIKRARQKLRELESISPNAAATQVDGTQMSLLAAPEEASPAVEALENLDPDSLTPRQALEWIYRLKSLV.

616-623 (GPNMGGKS) is a binding site for ATP.

Belongs to the DNA mismatch repair MutS family.

In terms of biological role, this protein is involved in the repair of mismatches in DNA. It is possible that it carries out the mismatch recognition step. This protein has a weak ATPase activity. This chain is DNA mismatch repair protein MutS, found in Salmonella dublin (strain CT_02021853).